Reading from the N-terminus, the 83-residue chain is Apolipoprotein C-I, basic form (83 aa).

Positions 1-26 (MRLFLSLPVLVVVLSIVLEGPAPAQG) are cleaved as a signal peptide.

This sequence belongs to the apolipoprotein C1 family.

Its subcellular location is the secreted. In terms of biological role, inhibitor of lipoprotein binding to the low density lipoprotein (LDL) receptor, LDL receptor-related protein, and very low density lipoprotein (VLDL) receptor. Associates with high density lipoproteins (HDL) and the triacylglycerol-rich lipoproteins in the plasma and makes up about 10% of the protein of the VLDL and 2% of that of HDL. Appears to interfere directly with fatty acid uptake and is also the major plasma inhibitor of cholesteryl ester transfer protein (CETP). Binds free fatty acids and reduces their intracellular esterification. Modulates the interaction of APOE with beta-migrating VLDL and inhibits binding of beta-VLDL to the LDL receptor-related protein. This chain is Apolipoprotein C-I, basic form (APOC1B), found in Pan troglodytes (Chimpanzee).